The primary structure comprises 462 residues: Transactivator/viroplasmin protein (462 aa).

Residues 433–462 form a disordered region; that stretch reads NVSNDEKRSTKSVSSDEINLSAENDGYQHS. Polar residues predominate over residues 443–462; the sequence is KSVSSDEINLSAENDGYQHS.

It belongs to the caulimoviridae viroplasmin family.

The protein localises to the host cytoplasm. Its function is as follows. Enhances the translation of downstream ORFs on polycistronic mRNAs derived from soybean chlorotic mottle virus. The sequence is that of Transactivator/viroplasmin protein from Soybean chlorotic mottle virus.